The chain runs to 302 residues: 4-hydroxy-tetrahydrodipicolinate synthase (302 aa).

Residue T44 participates in pyruvate binding. Y132 functions as the Proton donor/acceptor in the catalytic mechanism. The active-site Schiff-base intermediate with substrate is K160. Residue V202 participates in pyruvate binding.

Belongs to the DapA family. In terms of assembly, homotetramer; dimer of dimers.

It is found in the cytoplasm. The catalysed reaction is L-aspartate 4-semialdehyde + pyruvate = (2S,4S)-4-hydroxy-2,3,4,5-tetrahydrodipicolinate + H2O + H(+). Its pathway is amino-acid biosynthesis; L-lysine biosynthesis via DAP pathway; (S)-tetrahydrodipicolinate from L-aspartate: step 3/4. Functionally, catalyzes the condensation of (S)-aspartate-beta-semialdehyde [(S)-ASA] and pyruvate to 4-hydroxy-tetrahydrodipicolinate (HTPA). The polypeptide is 4-hydroxy-tetrahydrodipicolinate synthase (Thermomicrobium roseum (strain ATCC 27502 / DSM 5159 / P-2)).